The following is a 384-amino-acid chain: Chaperone protein DnaJ 1 (384 aa).

The 65-residue stretch at 4–68 (DYYGLLGVAR…EKRRIVDMGG (65 aa)) folds into the J domain. Residues 133 to 215 (GVTKHLTVDT…CGGDGRVRAR (83 aa)) form a CR-type zinc finger. Residues C146, C149, C163, C166, C189, C192, C203, and C206 each coordinate Zn(2+). CXXCXGXG motif repeat units lie at residues 146–153 (CDACHGSG), 163–170 (CETCGGAG), 189–196 (CPTCRGAG), and 203–210 (CHKCGGDG).

This sequence belongs to the DnaJ family. As to quaternary structure, homodimer. Requires Zn(2+) as cofactor.

The protein localises to the cytoplasm. Its function is as follows. Participates actively in the response to hyperosmotic and heat shock by preventing the aggregation of stress-denatured proteins and by disaggregating proteins, also in an autonomous, DnaK-independent fashion. Unfolded proteins bind initially to DnaJ; upon interaction with the DnaJ-bound protein, DnaK hydrolyzes its bound ATP, resulting in the formation of a stable complex. GrpE releases ADP from DnaK; ATP binding to DnaK triggers the release of the substrate protein, thus completing the reaction cycle. Several rounds of ATP-dependent interactions between DnaJ, DnaK and GrpE are required for fully efficient folding. Also involved, together with DnaK and GrpE, in the DNA replication of plasmids through activation of initiation proteins. This is Chaperone protein DnaJ 1 from Nocardia farcinica (strain IFM 10152).